The following is a 532-amino-acid chain: Carboxypeptidase Y (532 aa).

Positions 1–20 (MKAFTSLLCGLGLSTTLAKA) are cleaved as a signal peptide. Positions 21-111 (ISLQRPLGLD…AIENYQLRVN (91 aa)) are cleaved as a propeptide — mediates translocation across the endoplasmic reticulum, renders the enzyme inactive during transit, and targets the molecule to the vacuole. Positions 24 to 27 (QRPL) match the Vacuolar targeting signal motif. Asparagine 124 and asparagine 198 each carry an N-linked (GlcNAc...) (high mannose) asparagine glycan. Intrachain disulfides connect cysteine 167–cysteine 409, cysteine 304–cysteine 318, cysteine 328–cysteine 351, cysteine 335–cysteine 344, and cysteine 373–cysteine 379. The active site involves serine 257. Asparagine 279 is a glycosylation site (N-linked (GlcNAc...) (high mannose) asparagine). The active site involves aspartate 449. Cysteine 452 is a binding site for substrate. Asparagine 479 is a glycosylation site (N-linked (GlcNAc...) (high mannose) asparagine). Histidine 508 is a catalytic residue. Methionine 509 is a binding site for substrate.

It belongs to the peptidase S10 family. In terms of processing, enters the endoplasmic reticulum as an inactive zymogen and is modified by four N-linked core oligosaccharides, giving rise to a precursor known as P1 (67 kDa). As P1 transits through the Golgi, extension of its core oligosaccharides leads to the Golgi-modified P2 precursor (69 kDa). P2 is sorted away from secretory proteins at or beyond a late Golgi compartment and is subsequently delivered to the vacuole via a prevacuolar endosome-like compartment. Upon arrival in the vacuole, the N-terminal prosegment of P2 is cleaved by vacuolar proteases to yield the enzymatically active mature vacuolar form of CPY (61 kDa). Post-translationally, the four high mannose core N-glycans found in mature CPY are Man(11-15)GlcNAc(2) at Asn-124, Man(8-12)GlcNAc(2) at Asn-198, Man(9-14)GlcNAc(2) at Asn-279 and phosphorylated Man(12-17)GlcNAc(2) as well as Man(11-16)GlcNAc(2) at Asn-479.

The protein localises to the vacuole lumen. It carries out the reaction Release of a C-terminal amino acid with broad specificity.. Inhibited by ZPCK. Functionally, vacuolar serine-type carboxypeptidase involved in degradation of small peptides. Digests preferentially peptides containing an aliphatic or hydrophobic residue in P1' position, as well as methionine, leucine or phenylalanine in P1 position of ester substrate. Also plays a role in breakdown of the autophagic body and the autophagosome-dependent protein synthesis. Plays a key role in phytochelatin (PC) synthesis from glutathione (GSH) by cleaving the Gly from GSH and form the PC-peptides of the structure (gamma-Glu-Cys)2-Gly. Also involved in resistance to xenobiotics via the degradation of glutathione-S-conjugates. The sequence is that of Carboxypeptidase Y from Saccharomyces cerevisiae (strain ATCC 204508 / S288c) (Baker's yeast).